Here is a 459-residue protein sequence, read N- to C-terminus: Glutamate--isopropylamine ligase (459 aa).

One can recognise a GS beta-grasp domain in the interval 19–115; the sequence is HNIDTIRLGA…VLCDIQHLNG (97 aa). The 338-residue stretch at 122–459 folds into the GS catalytic domain; the sequence is PRNLLRKAIE…WELARYLDII (338 aa).

The protein belongs to the glutamine synthetase family.

It carries out the reaction isopropylamine + L-glutamate + ATP = gamma-L-glutamyl-isopropylamide + ADP + phosphate + H(+). Its function is as follows. Involved in the degradation of isopropylamine, which is a constituent of the herbicides atrazine. Catalyzes the ATP-dependent formation of gamma-glutamyl-isopropylamide from isopropylamine and L-glutamate. It can also use aminoalkanes, amino-alcohols (L-alaninol and D-alaninol) and amino-esters as substrates. This Pseudomonas sp protein is Glutamate--isopropylamine ligase (ipuC).